Consider the following 551-residue polypeptide: Putative hydroxymethylpyrimidine/phosphomethylpyrimidine kinase 2 (551 aa).

Glu76 is a 4-amino-5-hydroxymethyl-2-methylpyrimidine binding site.

This sequence in the N-terminal section; belongs to the ThiD family. It in the C-terminal section; belongs to the thiaminase-2 family.

It is found in the cytoplasm. The enzyme catalyses 4-amino-5-hydroxymethyl-2-methylpyrimidine + ATP = 4-amino-2-methyl-5-(phosphooxymethyl)pyrimidine + ADP + H(+). It catalyses the reaction 4-amino-2-methyl-5-(phosphooxymethyl)pyrimidine + ATP = 4-amino-2-methyl-5-(diphosphooxymethyl)pyrimidine + ADP. It participates in cofactor biosynthesis; thiamine diphosphate biosynthesis; 4-amino-2-methyl-5-diphosphomethylpyrimidine from 5-amino-1-(5-phospho-D-ribosyl)imidazole: step 2/3. The protein operates within cofactor biosynthesis; thiamine diphosphate biosynthesis; 4-amino-2-methyl-5-diphosphomethylpyrimidine from 5-amino-1-(5-phospho-D-ribosyl)imidazole: step 3/3. Catalyzes the phosphorylation of hydroxymethylpyrimidine phosphate (HMP-P) to HMP-PP, and of HMP to HMP-P. The polypeptide is Putative hydroxymethylpyrimidine/phosphomethylpyrimidine kinase 2 (Schizosaccharomyces pombe (strain 972 / ATCC 24843) (Fission yeast)).